The following is a 159-amino-acid chain: Ribosomal RNA large subunit methyltransferase H (159 aa).

Residues L76, G108, and 127–132 (LSKMTY) contribute to the S-adenosyl-L-methionine site.

The protein belongs to the RNA methyltransferase RlmH family. In terms of assembly, homodimer.

The protein localises to the cytoplasm. It carries out the reaction pseudouridine(1915) in 23S rRNA + S-adenosyl-L-methionine = N(3)-methylpseudouridine(1915) in 23S rRNA + S-adenosyl-L-homocysteine + H(+). In terms of biological role, specifically methylates the pseudouridine at position 1915 (m3Psi1915) in 23S rRNA. The protein is Ribosomal RNA large subunit methyltransferase H of Ruminiclostridium cellulolyticum (strain ATCC 35319 / DSM 5812 / JCM 6584 / H10) (Clostridium cellulolyticum).